Reading from the N-terminus, the 471-residue chain is Mannose-1-phosphate guanylyltransferase (471 aa).

This sequence belongs to the mannose-6-phosphate isomerase type 2 family.

It catalyses the reaction alpha-D-mannose 1-phosphate + GTP + H(+) = GDP-alpha-D-mannose + diphosphate. It participates in nucleotide-sugar biosynthesis; GDP-alpha-D-mannose biosynthesis; GDP-alpha-D-mannose from alpha-D-mannose 1-phosphate (GTP route): step 1/1. Its pathway is bacterial outer membrane biogenesis; LPS O-antigen biosynthesis. In terms of biological role, involved in GDP-mannose biosynthesis which serves as the activated sugar nucleotide precursor for mannose residues in cell surface polysaccharides. This enzyme participates in synthesis of the LPS O9 antigen. In Escherichia coli, this protein is Mannose-1-phosphate guanylyltransferase (manC).